Here is a 314-residue protein sequence, read N- to C-terminus: tRNA pseudouridine synthase B (314 aa).

Residue histidine 43 coordinates substrate. The active-site Nucleophile is the aspartate 48. Residues tyrosine 76, tyrosine 179, and leucine 200 each contribute to the substrate site.

It belongs to the pseudouridine synthase TruB family. Type 1 subfamily.

It catalyses the reaction uridine(55) in tRNA = pseudouridine(55) in tRNA. Responsible for synthesis of pseudouridine from uracil-55 in the psi GC loop of transfer RNAs. The protein is tRNA pseudouridine synthase B of Escherichia coli O139:H28 (strain E24377A / ETEC).